Here is a 245-residue protein sequence, read N- to C-terminus: Probable phosphatase YcdX (245 aa).

Residues H7, H9, H15, H40, E73, H101, H131, D192, and H194 each coordinate Zn(2+).

It belongs to the PHP family. In terms of assembly, homotrimer. Requires Zn(2+) as cofactor.

This chain is Probable phosphatase YcdX, found in Salmonella heidelberg (strain SL476).